Reading from the N-terminus, the 62-residue chain is Defensin BmKDfsin3 (62 aa).

An N-terminal signal peptide occupies residues 1–24 (MKTIVILFVLALVFCTLEMGMVEA). Cystine bridges form between C28/C49, C35/C57, and C39/C59.

The protein belongs to the invertebrate defensin family. Type 2 subfamily. As to expression, low expression in both venom and non-venom glands (hemolymph).

The protein resides in the secreted. Its function is as follows. Antibacterial peptide active against Gram-positive bacteria (including S.aureus ATCC25923 (MIC=2.5 uM), M.luteus AB93113 (MIC=2.5 uM), and the antibiotic-resistant S.epidermidis PRSE P1389 (MIC=1.25 uM)), but not against Gram-negative bacteria (including E.coli and P.aeruginosa). Also blocks the currents of Kv1.1/KCNA1 (57% inhibition), Kv1.2/KCNA2 (27.5% inhibition), Kv1.3/KCNA3 (IC(50)=23.4 nM, 84.3% inhibition), KCa3.1/KCNN4/IK (15% inhibition), KCa2.3/KCNN3/SK3 (87.5% inhibition) and Kv11.1/KCNH2/ERG1 (30.4% inhibition) channels (tested at 1 uM). It inhibits potassium channel current by interacting with the pore region. The chain is Defensin BmKDfsin3 from Olivierus martensii (Manchurian scorpion).